The sequence spans 1094 residues: Probable arabinosyltransferase C (1094 aa).

Transmembrane regions (helical) follow at residues 28 to 50, 232 to 251, 264 to 286, 341 to 360, 373 to 392, 431 to 453, 466 to 488, 530 to 552, 565 to 582, 586 to 608, 620 to 642, 657 to 679, and 700 to 722; these read IARY…TPLL, AAMI…LHIL, PARW…WWHF, SIWM…WVIS, TSRA…WLPL, IGAL…LVAI, RFGV…IPIF, SIAR…AMSL, SRRI…MMFT, WTHH…AVAV, TVFA…GWWY, WRWS…AAWF, and LAGI…EVVS. The span at 817–831 shows a compositional bias: low complexity; sequence GSEPGTEGGTTAAPG. Residues 817–836 form a disordered region; it reads GSEPGTEGGTTAAPGINGSR.

The protein belongs to the emb family.

The protein localises to the cell membrane. Functionally, arabinosyl transferase responsible for the polymerization of arabinose into the arabinan of arabinogalactan. This Mycobacterium tuberculosis (strain CDC 1551 / Oshkosh) protein is Probable arabinosyltransferase C (embC).